The following is a 631-amino-acid chain: MESPALSEFDLHLFAEGRHWHIYNVLGAHLVNHRGTEGTRFAVWAPNARAVSVIGDFNNWDSGRHAMAVNNGYGVWSLFIPGVKAGHLYKFAITTRNGHHITKTDPYGQAFEHRPSNAAVVTERGHYAWGDGDWLERRNRFDWQQSPISVYEVHPGSWRHHGSGRWLTYRELADQLVPYVLETGFTHIELLPVTEHPLDESWGYQTTGYYAPTSRFGSPDDLRYFVDQCHQNNIGVILDWVPGHFPDDDFALAEFDGTALYEHEDPRRGRHQDWGTLIYNYGRHEVRNFLIGSALFWLDTFHMDGLRVDAVASMLYLNYSRNEGEWLPNEHGGHENLDAIRFLQDLNRVCQSRFPGVLMMAEESTSWPRVTRPPEIGGLGFNLKWNMGWMHDTLHYLQQDPVYRQYHHDKLTFGLLYAFSENFVLPLSHDEVVHGKSSLIQKMPGDDWQQRASLRLLFSYMFSYPGAKLLFMGGEFGQRQEWSERRELDWYLLQYPEHQGLRKLVQDLNGLYRRYPALHRKSFTSEGFEWIDCHDSTQSVISFLRNPGTPEHGPLVIVANFTPIPRHHYRIGVPTGGNWQEIFNSDSTWYGGSNLGNPLLLQAEPTPWMARPCSVELTVPPLGLVMLRPAT.

Aspartate 309 (nucleophile) is an active-site residue. The active-site Proton donor is glutamate 362.

This sequence belongs to the glycosyl hydrolase 13 family. GlgB subfamily. Monomer.

The catalysed reaction is Transfers a segment of a (1-&gt;4)-alpha-D-glucan chain to a primary hydroxy group in a similar glucan chain.. The protein operates within glycan biosynthesis; glycogen biosynthesis. In terms of biological role, catalyzes the formation of the alpha-1,6-glucosidic linkages in glycogen by scission of a 1,4-alpha-linked oligosaccharide from growing alpha-1,4-glucan chains and the subsequent attachment of the oligosaccharide to the alpha-1,6 position. The chain is 1,4-alpha-glucan branching enzyme GlgB from Marinobacter nauticus (strain ATCC 700491 / DSM 11845 / VT8) (Marinobacter aquaeolei).